Here is a 170-residue protein sequence, read N- to C-terminus: Adenine phosphoribosyltransferase (170 aa).

It belongs to the purine/pyrimidine phosphoribosyltransferase family. In terms of assembly, homodimer.

The protein resides in the cytoplasm. It catalyses the reaction AMP + diphosphate = 5-phospho-alpha-D-ribose 1-diphosphate + adenine. It participates in purine metabolism; AMP biosynthesis via salvage pathway; AMP from adenine: step 1/1. In terms of biological role, catalyzes a salvage reaction resulting in the formation of AMP, that is energically less costly than de novo synthesis. The sequence is that of Adenine phosphoribosyltransferase from Mycoplasma capricolum subsp. capricolum (strain California kid / ATCC 27343 / NCTC 10154).